Here is a 238-residue protein sequence, read N- to C-terminus: uncharacterized protein (238 aa).

A run of 7 helical transmembrane segments spans residues 15–37, 50–69, 79–96, 101–118, 128–150, 163–183, and 203–225; these read FGAL…VLLP, ARAG…CGTL, LPFH…LYFI, IFFN…VAVL, ILYA…FSLL, CAVL…RRLG, and FFVY…YLPF.

The protein resides in the cell membrane. This is an uncharacterized protein from Treponema pallidum (strain Nichols).